The primary structure comprises 160 residues: SsrA-binding protein (160 aa).

This sequence belongs to the SmpB family.

The protein localises to the cytoplasm. Its function is as follows. Required for rescue of stalled ribosomes mediated by trans-translation. Binds to transfer-messenger RNA (tmRNA), required for stable association of tmRNA with ribosomes. tmRNA and SmpB together mimic tRNA shape, replacing the anticodon stem-loop with SmpB. tmRNA is encoded by the ssrA gene; the 2 termini fold to resemble tRNA(Ala) and it encodes a 'tag peptide', a short internal open reading frame. During trans-translation Ala-aminoacylated tmRNA acts like a tRNA, entering the A-site of stalled ribosomes, displacing the stalled mRNA. The ribosome then switches to translate the ORF on the tmRNA; the nascent peptide is terminated with the 'tag peptide' encoded by the tmRNA and targeted for degradation. The ribosome is freed to recommence translation, which seems to be the essential function of trans-translation. The chain is SsrA-binding protein from Zymomonas mobilis subsp. mobilis (strain ATCC 31821 / ZM4 / CP4).